The primary structure comprises 390 residues: 1-acyl-sn-glycerol-3-phosphate acyltransferase 2 (390 aa).

Residues Ala-2–Val-22 traverse the membrane as a helical segment. An HXXXXD motif motif is present at residues His-91–Asp-96. The next 2 helical transmembrane spans lie at Leu-305–Trp-325 and Lys-333–Ile-353. A disordered region spans residues Ser-358 to Lys-390.

This sequence belongs to the 1-acyl-sn-glycerol-3-phosphate acyltransferase family.

Its subcellular location is the endoplasmic reticulum membrane. It carries out the reaction a 1-acyl-sn-glycero-3-phosphate + an acyl-CoA = a 1,2-diacyl-sn-glycero-3-phosphate + CoA. It functions in the pathway phospholipid metabolism; CDP-diacylglycerol biosynthesis; CDP-diacylglycerol from sn-glycerol 3-phosphate: step 2/3. Its function is as follows. Converts lysophosphatidic acid (LPA) into phosphatidic acid by incorporating acyl moiety at the 2 position. The sequence is that of 1-acyl-sn-glycerol-3-phosphate acyltransferase 2 (LPAT2) from Brassica napus (Rape).